The sequence spans 172 residues: Dual-action ribosomal maturation protein DarP (172 aa).

The protein belongs to the DarP family.

Its subcellular location is the cytoplasm. Member of a network of 50S ribosomal subunit biogenesis factors which assembles along the 30S-50S interface, preventing incorrect 23S rRNA structures from forming. Promotes peptidyl transferase center (PTC) maturation. The chain is Dual-action ribosomal maturation protein DarP from Azotobacter vinelandii (strain DJ / ATCC BAA-1303).